Here is a 514-residue protein sequence, read N- to C-terminus: HTH-type transcriptional regulatory protein TyrR (514 aa).

The region spanning 2–72 (RLEVFCEDRL…GVTDVRTVPW (71 aa)) is the ACT domain. The PAS domain occupies 78–120 (EHLALSALLEALPEPVLSLDMKSKIEMANPASCQLFAHTQDRM). The 223-residue stretch at 206 to 428 (IIAVSAKMKH…VKNAIYRALT (223 aa)) folds into the Sigma-54 factor interaction domain. ATP-binding positions include 234–241 (GNTGTGKD) and 290–299 (ANGGSVLLDE). The H-T-H motif DNA-binding region spans 482-502 (STRKLAKRLGVSHTAIANKLR).

As to quaternary structure, homodimer. In presence of tyrosine (or high concentrations of phenylalanine or tryptophan) and ATP, it self-associates to form an hexamer.

The protein localises to the cytoplasm. In terms of biological role, dual transcriptional regulator of the TyrR regulon, which includes a number of genes coding for proteins involved in the biosynthesis or transport of the three aromatic amino acids, phenylalanine, tyrosine and tryptophan. These three aromatic amino acids act as effectors which bind to the TyrR protein to form an active regulatory protein. Acts by binding specifically to TyrR boxes in the promoter region of the target genes. This Citrobacter braakii protein is HTH-type transcriptional regulatory protein TyrR.